A 65-amino-acid chain; its full sequence is DNA-directed RNA polymerase subunit omega (65 aa).

It belongs to the RNA polymerase subunit omega family. In terms of assembly, the RNAP catalytic core consists of 2 alpha, 1 beta, 1 beta' and 1 omega subunit. When a sigma factor is associated with the core the holoenzyme is formed, which can initiate transcription.

It carries out the reaction RNA(n) + a ribonucleoside 5'-triphosphate = RNA(n+1) + diphosphate. Functionally, promotes RNA polymerase assembly. Latches the N- and C-terminal regions of the beta' subunit thereby facilitating its interaction with the beta and alpha subunits. The protein is DNA-directed RNA polymerase subunit omega of Baumannia cicadellinicola subsp. Homalodisca coagulata.